A 132-amino-acid polypeptide reads, in one-letter code: L-ectoine synthase (132 aa).

It belongs to the ectoine synthase family.

The catalysed reaction is (2S)-4-acetamido-2-aminobutanoate = L-ectoine + H2O. It participates in amine and polyamine biosynthesis; ectoine biosynthesis; L-ectoine from L-aspartate 4-semialdehyde: step 3/3. Functionally, catalyzes the circularization of gamma-N-acetyl-alpha,gamma-diaminobutyric acid (ADABA) to ectoine (1,4,5,6-tetrahydro-2-methyl-4-pyrimidine carboxylic acid), which is an excellent osmoprotectant. The sequence is that of L-ectoine synthase from Bordetella avium (strain 197N).